Here is a 421-residue protein sequence, read N- to C-terminus: Ankyrin repeat and SOCS box protein 6 (421 aa).

ANK repeat units follow at residues 67–97 (EGVS…NLNF), 102–131 (TYYT…DVNR), 136–166 (HESS…DVNA), 170–205 (HGKT…DVKA), 226–255 (GGDK…DPSE), and 260–289 (ESLT…AYNC). Positions 360–415 (ALHFSLRQLESYPPPLKHLCRVAIRLYLQPWPVDVKVKALPLPDRLKWYLLSEHSG) constitute an SOCS box domain.

The protein belongs to the ankyrin SOCS box (ASB) family. Binds APS. Identified in a complex with ELOB and ELOC. Interacts with CUL5 and RNF7. Interacts with SQSTM1. In terms of processing, ubiquitinated by RNF41; leading to proteasomal degradation.

It is found in the cytoplasm. It participates in protein modification; protein ubiquitination. In terms of biological role, probable substrate-recognition component of a SCF-like ECS (Elongin-Cullin-SOCS-box protein) E3 ubiquitin-protein ligase complex which mediates the ubiquitination and subsequent proteasomal degradation of target proteins. May play a role in the regulation of cell proliferation and autophagy by promoting the ubiquitination and degradation of SQSTM1. The sequence is that of Ankyrin repeat and SOCS box protein 6 (ASB6) from Homo sapiens (Human).